The sequence spans 432 residues: Serine hydroxymethyltransferase (432 aa).

Residues leucine 127 and 131–133 (GHL) each bind (6S)-5,6,7,8-tetrahydrofolate. Lysine 236 carries the post-translational modification N6-(pyridoxal phosphate)lysine.

It belongs to the SHMT family. In terms of assembly, homodimer. Pyridoxal 5'-phosphate is required as a cofactor.

The protein resides in the cytoplasm. It catalyses the reaction (6R)-5,10-methylene-5,6,7,8-tetrahydrofolate + glycine + H2O = (6S)-5,6,7,8-tetrahydrofolate + L-serine. The protein operates within one-carbon metabolism; tetrahydrofolate interconversion. It functions in the pathway amino-acid biosynthesis; glycine biosynthesis; glycine from L-serine: step 1/1. In terms of biological role, catalyzes the reversible interconversion of serine and glycine with tetrahydrofolate (THF) serving as the one-carbon carrier. This reaction serves as the major source of one-carbon groups required for the biosynthesis of purines, thymidylate, methionine, and other important biomolecules. Also exhibits THF-independent aldolase activity toward beta-hydroxyamino acids, producing glycine and aldehydes, via a retro-aldol mechanism. The sequence is that of Serine hydroxymethyltransferase from Rhizobium etli (strain ATCC 51251 / DSM 11541 / JCM 21823 / NBRC 15573 / CFN 42).